A 524-amino-acid chain; its full sequence is Translation initiation factor eIF2B subunit delta (524 aa).

A disordered region spans residues 1 to 173; it reads MATAAVAVRE…ERQQVPTRKD (173 aa). An N-acetylalanine modification is found at alanine 2. Position 12 is a phosphoserine (serine 12). Residues 26-40 show a composition bias toward basic and acidic residues; it reads AEGREMTQEEKLQLR. The span at 41 to 51 shows a compositional bias: basic residues; that stretch reads KEKKQQKKKRK. A Phosphothreonine modification is found at threonine 86. Composition is skewed to basic and acidic residues over residues 87–121 and 161–173; these read AKEK…RKGD and KKPE…TRKD. The may bind the chemical integrated stress response (ISR) inhibitor ISRIB stretch occupies residues 171–180; sequence RKDYGSKVSL.

It belongs to the eIF-2B alpha/beta/delta subunits family. As to quaternary structure, component of the translation initiation factor 2B (eIF2B) complex which is a heterodecamer of two sets of five different subunits: alpha, beta, gamma, delta and epsilon. Subunits alpha, beta and delta comprise a regulatory subcomplex and subunits epsilon and gamma comprise a catalytic subcomplex. Within the complex, the hexameric regulatory complex resides at the center, with the two heterodimeric catalytic subcomplexes bound on opposite sides.

The protein localises to the cytoplasm. The protein resides in the cytosol. Its activity is regulated as follows. Activated by the chemical integrated stress response (ISR) inhibitor ISRIB which stimulates guanine nucleotide exchange factor activity for both phosphorylated and unphosphorylated eIF2. In terms of biological role, acts as a component of the translation initiation factor 2B (eIF2B) complex, which catalyzes the exchange of GDP for GTP on eukaryotic initiation factor 2 (eIF2) gamma subunit. Its guanine nucleotide exchange factor activity is repressed when bound to eIF2 complex phosphorylated on the alpha subunit, thereby limiting the amount of methionyl-initiator methionine tRNA available to the ribosome and consequently global translation is repressed. The chain is Translation initiation factor eIF2B subunit delta (EIF2B4) from Bos taurus (Bovine).